We begin with the raw amino-acid sequence, 884 residues long: Protein P (884 aa).

The tract at residues 1 to 184 (MHPFSRLFRN…GKPYSWEHRQ (184 aa)) is terminal protein domain (TP). The segment at 185-387 (LVQHNGQQHK…YCIHHIVSSL (203 aa)) is spacer. Disordered regions lie at residues 218–241 (PSEPVSVSTRNLSNNISDKSQKST) and 299–345 (RNSG…DFSS). Composition is skewed to polar residues over residues 222 to 241 (VSVSTRNLSNNISDKSQKST) and 323 to 332 (YSSNSTSQRY). The tract at residues 388–729 (DDWGPCTVTG…YEELWPVVRQ (342 aa)) is polymerase/reverse transcriptase domain (RT). The region spanning 398–639 (DVTIKSPRTP…NHLHFMGYVI (242 aa)) is the Reverse transcriptase domain. Residues Asp470, Asp590, and Asp591 each contribute to the Mg(2+) site.

Belongs to the hepadnaviridae P protein family.

It catalyses the reaction DNA(n) + a 2'-deoxyribonucleoside 5'-triphosphate = DNA(n+1) + diphosphate. It carries out the reaction Endonucleolytic cleavage to 5'-phosphomonoester.. With respect to regulation, activated by host HSP70 and HSP40 in vitro to be able to bind the epsilon loop of the pgRNA. Because deletion of the RNase H region renders the protein partly chaperone-independent, the chaperones may be needed indirectly to relieve occlusion of the RNA-binding site by this domain. Inhibited by several reverse-transcriptase inhibitors: Lamivudine, Adefovir and Entecavir. Multifunctional enzyme that converts the viral RNA genome into dsDNA in viral cytoplasmic capsids. This enzyme displays a DNA polymerase activity that can copy either DNA or RNA templates, and a ribonuclease H (RNase H) activity that cleaves the RNA strand of RNA-DNA heteroduplexes in a partially processive 3'- to 5'-endonucleasic mode. Neo-synthesized pregenomic RNA (pgRNA) are encapsidated together with the P protein, and reverse-transcribed inside the nucleocapsid. Initiation of reverse-transcription occurs first by binding the epsilon loop on the pgRNA genome, and is initiated by protein priming, thereby the 5'-end of (-)DNA is covalently linked to P protein. Partial (+)DNA is synthesized from the (-)DNA template and generates the relaxed circular DNA (RC-DNA) genome. After budding and infection, the RC-DNA migrates in the nucleus, and is converted into a plasmid-like covalently closed circular DNA (cccDNA). The activity of P protein does not seem to be necessary for cccDNA generation, and is presumably released from (+)DNA by host nuclear DNA repair machinery. This Marmota monax (Woodchuck) protein is Protein P.